The sequence spans 340 residues: Heat-inducible transcription repressor HrcA (340 aa).

The protein belongs to the HrcA family.

Functionally, negative regulator of class I heat shock genes (grpE-dnaK-dnaJ and groELS operons). Prevents heat-shock induction of these operons. The protein is Heat-inducible transcription repressor HrcA of Mycoplasma mycoides subsp. mycoides SC (strain CCUG 32753 / NCTC 10114 / PG1).